The primary structure comprises 129 residues: Small ribosomal subunit protein uS8mz (129 aa).

Belongs to the universal ribosomal protein uS8 family. Component of the mitochondrial ribosome small subunit.

Its subcellular location is the mitochondrion. This chain is Small ribosomal subunit protein uS8mz (RPS15AB), found in Arabidopsis thaliana (Mouse-ear cress).